The following is a 329-amino-acid chain: Ketol-acid reductoisomerase (NADP(+)) (329 aa).

Residues 2–182 (TQLFYDTDAD…GGTRAGILET (181 aa)) enclose the KARI N-terminal Rossmann domain. NADP(+) is bound by residues 25 to 28 (YGSQ), S51, S53, and 83 to 86 (DEFQ). Residue H108 is part of the active site. G134 contributes to the NADP(+) binding site. Residues 183–328 (NFKEETETDL…KGLRSMFSWL (146 aa)) form the KARI C-terminal knotted domain. Mg(2+)-binding residues include D191, E195, E227, and E231. A substrate-binding site is contributed by S252.

The protein belongs to the ketol-acid reductoisomerase family. Mg(2+) is required as a cofactor.

It catalyses the reaction (2R)-2,3-dihydroxy-3-methylbutanoate + NADP(+) = (2S)-2-acetolactate + NADPH + H(+). It carries out the reaction (2R,3R)-2,3-dihydroxy-3-methylpentanoate + NADP(+) = (S)-2-ethyl-2-hydroxy-3-oxobutanoate + NADPH + H(+). It participates in amino-acid biosynthesis; L-isoleucine biosynthesis; L-isoleucine from 2-oxobutanoate: step 2/4. It functions in the pathway amino-acid biosynthesis; L-valine biosynthesis; L-valine from pyruvate: step 2/4. In terms of biological role, involved in the biosynthesis of branched-chain amino acids (BCAA). Catalyzes an alkyl-migration followed by a ketol-acid reduction of (S)-2-acetolactate (S2AL) to yield (R)-2,3-dihydroxy-isovalerate. In the isomerase reaction, S2AL is rearranged via a Mg-dependent methyl migration to produce 3-hydroxy-3-methyl-2-ketobutyrate (HMKB). In the reductase reaction, this 2-ketoacid undergoes a metal-dependent reduction by NADPH to yield (R)-2,3-dihydroxy-isovalerate. This chain is Ketol-acid reductoisomerase (NADP(+)), found in Prochlorococcus marinus (strain MIT 9215).